The chain runs to 184 residues: Probable chemoreceptor glutamine deamidase CheD (184 aa).

Belongs to the CheD family.

The enzyme catalyses L-glutaminyl-[protein] + H2O = L-glutamyl-[protein] + NH4(+). Functionally, probably deamidates glutamine residues to glutamate on methyl-accepting chemotaxis receptors (MCPs), playing an important role in chemotaxis. This chain is Probable chemoreceptor glutamine deamidase CheD, found in Rhizobium rhizogenes (strain K84 / ATCC BAA-868) (Agrobacterium radiobacter).